Reading from the N-terminus, the 393-residue chain is MSTINVEHTYPAVSSLIADLKSRKVQGPFAVAVETALVMRQVISQTRWSTVDQLIDTVRAVGSTLVKAQPTEFSCGNIIRRILRLIREEYQELLKTADENEKLIVSSSNSSSPSQKRDIPSNEKLVQSHEPVSVQMYSSMLNLLGRPTLESPTHSKTVGDSRVTGGMDMRAVIISGIQDVIDELDKINTDIEVQSMDHLHSNEIILTQGCSKTVEAFLRFAAKKRKFSVIVAEGFPNNQKGSHAMAKRLAQAGIDTTVISDATIFAIMSRVNKVILGTHAILGNGGLVTYSGAQLVAQAARHHATPVVVCSGIYKLSPVYPYDLESIIQLSSPDKIMSFNEGDLISRAEILNPYYDYIPPDLVDLFITNLGGYPPSYLYRIMNDTYDASDTIL.

The segment at 105–125 (VSSSNSSSPSQKRDIPSNEKL) is disordered. Serine 106, serine 108, and serine 112 each carry phosphoserine.

It belongs to the eIF-2B alpha/beta/delta subunits family. Component of the translation initiation factor 2B (eIF2B) complex which is a heterodecamer of two sets of five different subunits: alpha, beta, gamma, delta and epsilon. Subunits alpha, beta and delta comprise a regulatory subcomplex and subunits epsilon and gamma comprise a catalytic subcomplex. Within the complex, the hexameric regulatory complex resides at the center, with the two heterodimeric catalytic subcomplexes bound on opposite sides.

It is found in the cytoplasm. The protein resides in the cytosol. Its function is as follows. Acts as a component of the translation initiation factor 2B (eIF2B) complex, which catalyzes the exchange of GDP for GTP on the eukaryotic initiation factor 2 (eIF2) complex gamma subunit. Its guanine nucleotide exchange factor activity is repressed when bound to eIF2 complex phosphorylated on the alpha subunit, thereby limiting the amount of methionyl-initiator methionine tRNA available to the ribosome and consequently global translation is repressed. The polypeptide is Translation initiation factor eIF2B subunit beta (tif222) (Schizosaccharomyces pombe (strain 972 / ATCC 24843) (Fission yeast)).